The following is a 962-amino-acid chain: Vacuolar membrane protease (962 aa).

Topologically, residues M1–K14 are cytoplasmic. Residues T15–D35 form a helical membrane-spanning segment. The Vacuolar portion of the chain corresponds to R36–F359. A glycan (N-linked (GlcNAc...) asparagine) is linked at N118. Zn(2+)-binding residues include H153 and D165. Residue E197 is the Proton acceptor of the active site. Zn(2+) is bound by residues E198, E223, and H297. Residues T360 to I380 traverse the membrane as a helical segment. The Cytoplasmic segment spans residues Q381–P390. Residues L391–F411 form a helical membrane-spanning segment. Residues R412–T431 are Vacuolar-facing. A helical transmembrane segment spans residues I432–L452. Topologically, residues A453–T460 are cytoplasmic. Residues V461–L481 traverse the membrane as a helical segment. At C482–T489 the chain is on the vacuolar side. A helical membrane pass occupies residues G490–V510. At C511–S601 the chain is on the cytoplasmic side. Over residues A531–N554 the composition is skewed to polar residues. Residues A531–A563 are disordered. Residues V602–I622 form a helical membrane-spanning segment. Residues L623–N639 lie on the Vacuolar side of the membrane. N639 carries N-linked (GlcNAc...) asparagine glycosylation. A helical membrane pass occupies residues V640–Y660. Residue K661 is a topological domain, cytoplasmic. A helical transmembrane segment spans residues L662–F682. Residues E683 to L962 are Vacuolar-facing. N812 and N839 each carry an N-linked (GlcNAc...) asparagine glycan.

Belongs to the peptidase M28 family. Zn(2+) is required as a cofactor.

The protein resides in the vacuole membrane. Functionally, may be involved in vacuolar sorting and osmoregulation. The protein is Vacuolar membrane protease of Lachancea thermotolerans (strain ATCC 56472 / CBS 6340 / NRRL Y-8284) (Yeast).